The primary structure comprises 577 residues: Acyl-coenzyme A synthetase ACSM1, mitochondrial (577 aa).

A mitochondrion-targeting transit peptide spans 1 to 31; that stretch reads MQWLMRFRTLWGIHKSFHNIHPAPSQLRCRS. Lys-85 bears the N6-succinyllysine mark. An N6-acetyllysine; alternate modification is found at Lys-146. N6-succinyllysine; alternate is present on Lys-146. N6-succinyllysine is present on Lys-183. Lys-204 carries the N6-acetyllysine; alternate modification. Lys-204 is subject to N6-succinyllysine; alternate. The residue at position 214 (Lys-214) is an N6-acetyllysine. 226–234 is an ATP binding site; that stretch reads TSGTTGFPK. An N6-succinyllysine modification is found at Lys-237. N6-acetyllysine; alternate occurs at positions 356 and 391. Residues Lys-356 and Lys-391 each carry the N6-succinyllysine; alternate modification. The ATP site is built by Asp-452 and Arg-467. N6-acetyllysine is present on Lys-531. Lys-538 is subject to N6-acetyllysine; alternate. Lys-538 carries the post-translational modification N6-succinyllysine; alternate. Lys-549 carries the N6-acetyllysine modification. Position 563 (Lys-563) interacts with ATP.

Belongs to the ATP-dependent AMP-binding enzyme family. Monomer. Requires Mg(2+) as cofactor. The cofactor is Mn(2+).

Its subcellular location is the mitochondrion matrix. It localises to the mitochondrion. The enzyme catalyses a medium-chain fatty acid + ATP + CoA = a medium-chain fatty acyl-CoA + AMP + diphosphate. It carries out the reaction benzoate + ATP + CoA = benzoyl-CoA + AMP + diphosphate. The catalysed reaction is (R)-lipoate + GTP + H(+) = (R)-lipoyl-GMP + diphosphate. It catalyses the reaction octanoate + ATP + CoA = octanoyl-CoA + AMP + diphosphate. The enzyme catalyses decanoate + ATP + CoA = decanoyl-CoA + AMP + diphosphate. It carries out the reaction dodecanoate + ATP + CoA = dodecanoyl-CoA + AMP + diphosphate. The catalysed reaction is tetradecanoate + ATP + CoA = tetradecanoyl-CoA + AMP + diphosphate. It catalyses the reaction hexanoate + ATP + CoA = hexanoyl-CoA + AMP + diphosphate. The enzyme catalyses butanoate + ATP + CoA = butanoyl-CoA + AMP + diphosphate. It carries out the reaction hexadecanoate + ATP + CoA = hexadecanoyl-CoA + AMP + diphosphate. Activated by monovalent cations, such as potassium, rubidium or ammonium. In terms of biological role, catalyzes the activation of fatty acids by CoA to produce an acyl-CoA, the first step in fatty acid metabolism. Capable of activating medium-chain fatty acids (e.g. butyric (C4) to decanoic (C10) acids), and certain carboxylate-containing xenobiotics, e.g. benzoate. Also catalyzes the activation of lipoate to lipoyl-nucleoside monophosphate. Activates lipoate with GTP at a 1000-fold higher rate than with ATP and activates both (R)- and (S)-lipoate to the respective lipoyl-GMP, with a preference for (R)-lipoate. The chain is Acyl-coenzyme A synthetase ACSM1, mitochondrial (ACSM1) from Homo sapiens (Human).